The following is a 245-amino-acid chain: Uridylate kinase (245 aa).

Residue 12-15 (KLSG) coordinates ATP. The interval 20–25 (GEKGVG) is involved in allosteric activation by GTP. Gly54 serves as a coordination point for UMP. Residues Gly55 and Arg59 each contribute to the ATP site. UMP is bound by residues Asp74 and 135 to 142 (IGSPYFST). The ATP site is built by Asn163, Tyr169, and Asp172.

This sequence belongs to the UMP kinase family. In terms of assembly, homohexamer.

The protein localises to the cytoplasm. The catalysed reaction is UMP + ATP = UDP + ADP. Its pathway is pyrimidine metabolism; CTP biosynthesis via de novo pathway; UDP from UMP (UMPK route): step 1/1. Its activity is regulated as follows. Allosterically activated by GTP. Inhibited by UTP. Functionally, catalyzes the reversible phosphorylation of UMP to UDP. This Streptococcus thermophilus (strain ATCC BAA-491 / LMD-9) protein is Uridylate kinase.